The sequence spans 562 residues: SLAIN motif-containing protein-like (562 aa).

Disordered regions lie at residues 292–313 (QDYASSSASVSRRSSSASLHSL), 344–381 (HRYSPSPLSSPRCQSPSAAESRATTSRIRPPRRSIQNH), and 409–562 (SLEA…DGCY). Composition is skewed to low complexity over residues 295–311 (ASSSASVSRRSSSASLH) and 345–355 (RYSPSPLSSPR). Composition is skewed to polar residues over residues 356 to 370 (CQSPSAAESRATTSR), 424 to 442 (QGPSSRLTRMQQPSTSTPP), 465 to 531 (VSTS…STVP), and 539 to 553 (SRRSLPSAKMNSTLG).

Belongs to the SLAIN motif-containing family.

The protein is SLAIN motif-containing protein-like of Xenopus laevis (African clawed frog).